A 136-amino-acid chain; its full sequence is MKILARFRKAEPASIYDRIGGHEALEVVVENFYVRVLADEQLSGFFTGTNMNRLKGKQVEFFAAALGGPHPYTGAPMKQVHQGRGITMHHFGLVAGHLADALTAAGVPSETVSEILGAIAPLAPEIATGEAGKVTV.

Position 81 (H81) interacts with heme.

This sequence belongs to the truncated hemoglobin family. Group I subfamily. Homodimer. It depends on heme as a cofactor.

Binds oxygen cooperatively with very high affinity because of a fast combination and a slow dissociation rate. The polypeptide is Group 1 truncated hemoglobin GlbN (glbN) (Mycolicibacterium paratuberculosis (strain ATCC BAA-968 / K-10) (Mycobacterium paratuberculosis)).